A 123-amino-acid chain; its full sequence is SGSCEVKTCWWAQPDFRAIGDYLKDKYDSASEMAVEKHRESRGWVETLRARYALFKPPTERDLVYYEGSPNFCEPNPETGSFGTKDRTCNVTSHGIDGCDLLCCGRGHNTRTEKRKEKCHCIF.

Serine 1 carries O-palmitoleoyl serine; by PORCN lipidation. Cysteine 89 and cysteine 104 are oxidised to a cystine. Asparagine 90 carries N-linked (GlcNAc...) asparagine glycosylation.

It belongs to the Wnt family. Palmitoleoylation is required for efficient binding to frizzled receptors. Depalmitoleoylation leads to Wnt signaling pathway inhibition.

The protein resides in the secreted. It is found in the extracellular space. It localises to the extracellular matrix. Its function is as follows. Ligand for members of the frizzled family of seven transmembrane receptors. Probable developmental protein. May be a signaling molecule which affects the development of discrete regions of tissues. Is likely to signal over only few cell diameters. The polypeptide is Protein Wnt-3b (WNT-3B) (Plethodon jordani (Red-cheeked salamander)).